A 312-amino-acid polypeptide reads, in one-letter code: Putative mitochondrial transporter UCP3 (312 aa).

The Mitochondrial intermembrane segment spans residues 1-10 (MVGLKPSDVP). The helical transmembrane segment at 11–32 (PTMAVKFLGAGTAACFADLVTF) threads the bilayer. Solcar repeat units follow at residues 11 to 105 (PTMA…VKQV), 114 to 206 (SSLT…LKEK), and 215 to 300 (DNFP…LKRA). Over 33–76 (PLDTAKVRLQIQGENQAVQTARLVQYRGVLGTILTMVRTEGPCS) the chain is Mitochondrial matrix. Residues 77-99 (PYNGLVAGLQRQMSFASIRIGLY) form a helical membrane-spanning segment. Over 100-119 (DSVKQVYTPKGADNSSLTTR) the chain is Mitochondrial intermembrane. Residues 120-136 (ILAGCTTGAMAVTCAQP) traverse the membrane as a helical segment. The Mitochondrial matrix portion of the chain corresponds to 137–183 (TDVVKVRFQASIHLGPSRSDRKYSGTMDAYRTIAREEGVRGLWKGTL). The helical transmembrane segment at 184–200 (PNIMRNAIVNCAEVVTY) threads the bilayer. Residues 201 to 217 (DILKEKLLDYHLLTDNF) are Mitochondrial intermembrane-facing. A helical membrane pass occupies residues 218–237 (PCHFVSAFGAGFCATVVASP). Residues 238–271 (VDVVKTRYMNSPPGQYFSPLDCMIKMVAQEGPTA) are Mitochondrial matrix-facing. Residues 272–294 (FYKGFTPSFLRLGSWNVVMFVTY) form a helical membrane-spanning segment. Residues 279-301 (SFLRLGSWNVVMFVTYEQLKRAL) are purine nucleotide binding. The Mitochondrial intermembrane segment spans residues 295–312 (EQLKRALMKVQMLRESPF).

The protein belongs to the mitochondrial carrier (TC 2.A.29) family. In terms of assembly, interacts with HAX1; the interaction is direct and calcium-dependent. In terms of tissue distribution, only in skeletal muscle and heart. Also expressed in white and brown adipose tissues. Is more expressed in glycolytic than in oxidative skeletal muscles.

It localises to the mitochondrion inner membrane. The proton transporter activity is activated by fatty acids (in vitro). The proton transporter activity is inhibited by ATP and ADP (in vitro). The effect of Ubiquinone/coenzyme Q10 on the proton transporter activity in reconstituted membranes is unclear (in vitro). In terms of biological role, putative transmembrane transporter that plays a role in mitochondrial metabolism via an as yet unclear mechanism. Originally, this mitochondrial protein was thought to act as a proton transmembrane transporter from the mitochondrial intermembrane space into the matrix, causing proton leaks through the inner mitochondrial membrane, thereby uncoupling mitochondrial membrane potential generation from ATP synthesis. However, this function is controversial and uncoupling may not be the function, or at least not the main function, but rather a consequence of more conventional metabolite transporter activity. This Homo sapiens (Human) protein is Putative mitochondrial transporter UCP3.